We begin with the raw amino-acid sequence, 77 residues long: Large ribosomal subunit protein bL28 (77 aa).

It belongs to the bacterial ribosomal protein bL28 family.

In Methylibium petroleiphilum (strain ATCC BAA-1232 / LMG 22953 / PM1), this protein is Large ribosomal subunit protein bL28.